A 793-amino-acid chain; its full sequence is Serine/threonine-protein phosphatase 1 regulatory subunit GAC1 (793 aa).

The segment covering 1 to 10 (MVIQTATTLS) has biased composition (polar residues). The disordered stretch occupies residues 1-20 (MVIQTATTLSPAKARPSFPH). Positions 235–360 (TKYLNGQNVK…NNNGKNYHLF (126 aa)) constitute a CBM21 domain. Phosphoserine is present on residues Ser415 and Ser424. 2 disordered regions span residues 450–491 (LENA…SIDL) and 616–671 (TTMD…LNDH). The span at 623 to 633 (KTSTINNSTDT) shows a compositional bias: polar residues. A compositionally biased stretch (basic and acidic residues) spans 637 to 648 (PSKENGTVKENK). Over residues 649 to 665 (SSANSTSAPSSSQNRAS) the composition is skewed to low complexity.

In terms of biological role, regulates the activity of glycogen synthase. It is most probably a regulatory subunit for protein phosphatase type 1. This Saccharomyces cerevisiae (strain ATCC 204508 / S288c) (Baker's yeast) protein is Serine/threonine-protein phosphatase 1 regulatory subunit GAC1 (GAC1).